The chain runs to 204 residues: Putative AgrB-like protein (204 aa).

5 helical membrane passes run 52-74, 87-107, 111-131, 151-168, and 173-190; these read YGIA…YLWL, LNCT…FQNI, NWIV…FAPA, AMIG…IPFA, and LIMV…PLTY.

It belongs to the AgrB family.

The protein resides in the cell membrane. In terms of biological role, may be involved in the proteolytic processing of a quorum sensing system signal molecule precursor. The polypeptide is Putative AgrB-like protein (Listeria monocytogenes serovar 1/2a (strain ATCC BAA-679 / EGD-e)).